Consider the following 372-residue polypeptide: MTDPLAELSAAGVSIWIDDISRDRLQTGNLAALIRDRHVVGVTTNPTIFGKAIEGSARYQDQLRDLAVRGVDVNEALRALTAYDVRWACDVTRPVFDATDGVDGRVSIEVDPRLAHDTEATIAEARALWWLVDRPNLFIKIPATVEGLPAIAQCLAEGISVNVTLIFSVKRYEQVIDAFFDGVERAIEAGHDLSRLASVASFFVSRVDTEVDKRLEKIGGEALQWKAKAAVANARLAYRTYEEKFATPRWQALAAKGARPQRPLWASTSTKDPSLPDTLYVTELVAPGTVNTMPESTLQAVYDHGVIRGDTIRGYYADAQATLDALATLGIDYDDVTDTLEREGVEKFEASWTELAAAVTRSLERARRERGR.

The active-site Schiff-base intermediate with substrate is lysine 140.

Belongs to the transaldolase family. Type 2 subfamily.

Its subcellular location is the cytoplasm. The catalysed reaction is D-sedoheptulose 7-phosphate + D-glyceraldehyde 3-phosphate = D-erythrose 4-phosphate + beta-D-fructose 6-phosphate. It participates in carbohydrate degradation; pentose phosphate pathway; D-glyceraldehyde 3-phosphate and beta-D-fructose 6-phosphate from D-ribose 5-phosphate and D-xylulose 5-phosphate (non-oxidative stage): step 2/3. Transaldolase is important for the balance of metabolites in the pentose-phosphate pathway. The polypeptide is Transaldolase (Acidothermus cellulolyticus (strain ATCC 43068 / DSM 8971 / 11B)).